The following is a 1029-amino-acid chain: Translation initiation factor IF-2 (1029 aa).

The disordered stretch occupies residues 73–441 (RELRSEEDDG…RQRRRERKRE (369 aa)). Acidic residues-rich tracts occupy residues 106–121 (TAEEAAEPAVADDEEE) and 148–177 (AEAEPSGDEASAEASADDAPADEAPTDEAE). Residues 183 to 196 (AADKDAAAIADEQK) show a composition bias toward basic and acidic residues. Composition is skewed to acidic residues over residues 213 to 234 (TGEETSDTDAATEADATDDAEA), 242 to 258 (TEAEPETPADETEAEDV), and 279 to 322 (APDE…DEEG). A compositionally biased stretch (basic and acidic residues) spans 358–372 (KDKDKDKSSKKDKKD). Basic residues predominate over residues 373–386 (KSNKKSKSKGKKQK). Positions 400–411 (QTLQETLQELEQ) are enriched in low complexity. The segment covering 417–427 (RQRRRRRRRKR) has biased composition (basic residues). Residues 428–441 (HEEERQRRRERKRE) are compositionally biased toward basic and acidic residues. The tr-type G domain maps to 524-696 (PRAPVVTVMG…LLQSEIMELK (173 aa)). The G1 stretch occupies residues 533 to 540 (GHVDHGKT). 533–540 (GHVDHGKT) is a GTP binding site. The G2 stretch occupies residues 558-562 (GITQH). Residues 582 to 585 (DTPG) form a G3 region. Residues 582–586 (DTPGH) and 636–639 (NKMD) contribute to the GTP site. Positions 636–639 (NKMD) are G4. The G5 stretch occupies residues 672–674 (SAK).

This sequence belongs to the TRAFAC class translation factor GTPase superfamily. Classic translation factor GTPase family. IF-2 subfamily.

The protein resides in the cytoplasm. One of the essential components for the initiation of protein synthesis. Protects formylmethionyl-tRNA from spontaneous hydrolysis and promotes its binding to the 30S ribosomal subunits. Also involved in the hydrolysis of GTP during the formation of the 70S ribosomal complex. This Salinibacter ruber (strain DSM 13855 / M31) protein is Translation initiation factor IF-2.